We begin with the raw amino-acid sequence, 336 residues long: MMEATGLEGLESTSSPCPGSTGTGLSWDNGTRHNATFPEPLPALYVLLPVVYSVICAVGLVGNAAVICVILRAPKMKTVTHVFILNLAIADGLFTLVLPTNIAEHLLQRWPFGEVLCKLVLAIDHCNIFSSVYFLAAMSIDRYLVVLATARSRRMPRRTVHRAKVASLCVWLGVTVAVLPFLTFAGVYNNELQVTSCGLSFPRPERAWFQASRIYTLVLGFVVPMCTLCVLYADLLRRLRALRLHSGAKALGKAKRKVSLLVLAVLAVGLLCWTPFHLASIVALTTDLPQTPLVIIVSYVVTSLSYTSSCLNPFLYAFLDHSFRKSLRTACRCQGA.

Residues M1–L25 are disordered. Residues M1–Y45 lie on the Extracellular side of the membrane. Low complexity predominate over residues S12–L25. Residues N29 and N34 are each glycosylated (N-linked (GlcNAc...) asparagine). The chain crosses the membrane as a helical span at residues V46–C68. Residues V69–T80 lie on the Cytoplasmic side of the membrane. The chain crosses the membrane as a helical span at residues H81–A103. Topologically, residues E104–N127 are extracellular. Residues C117 and C197 are joined by a disulfide bond. The helical transmembrane segment at I128 to V146 threads the bilayer. Residues L147–V165 lie on the Cytoplasmic side of the membrane. The chain crosses the membrane as a helical span at residues A166–Y188. Residues N189–R213 are Extracellular-facing. A helical transmembrane segment spans residues I214–L236. At R237 to R256 the chain is on the cytoplasmic side. The chain crosses the membrane as a helical span at residues K257–A279. Residues S280–L293 lie on the Extracellular side of the membrane. The helical transmembrane segment at V294–Y316 threads the bilayer. At A317–A336 the chain is on the cytoplasmic side.

This sequence belongs to the G-protein coupled receptor 1 family.

It is found in the cell membrane. Functionally, interacts specifically with a number of opioid ligands. Receptor for neuropeptides B and W, which may be involved in neuroendocrine system regulation, food intake and the organization of other signals. This chain is Neuropeptides B/W receptor type 2 (NPBWR2), found in Bos taurus (Bovine).